A 491-amino-acid polypeptide reads, in one-letter code: Keratin, type I cytoskeletal 24 (491 aa).

The disordered stretch occupies residues 1 to 23; that stretch reads MFCSAQKGSCSSRVSSSGAVGSR. The tract at residues 1-117 is head; sequence MFCSAQKGSC…GYDGGLLSGS (117 aa). The span at 8–23 shows a compositional bias: low complexity; the sequence is GSCSSRVSSSGAVGSR. A coil 1A region spans residues 118-153; it reads EKQTMQGLNDRLANYLDKVRALEEANTDLETKIKDW. The IF rod domain maps to 118–432; that stretch reads EKQTMQGLND…RLLNGDGGGC (315 aa). A linker 1 region spans residues 154 to 174; the sequence is YGRHGSGKDGPGRDYSQYCSV. The segment at 175–266 is coil 1B; the sequence is IEDLKNQIIS…KNHEEEMKCL (92 aa). Residues 267–289 are linker 12; the sequence is QGSSGGDVTVEMNATPGTDLTKL. Positions 290–428 are coil 2; it reads LNDMRAQYEA…ETYRRLLNGD (139 aa). The interval 429-491 is tail; it reads GGGCDYRNLV…VSNISEVKIK (63 aa).

The protein belongs to the intermediate filament family. Heterotetramer of two type I and two type II keratins.

This is Keratin, type I cytoskeletal 24 (Krt24) from Rattus norvegicus (Rat).